The sequence spans 334 residues: MTSDELSFVHDAVLLQEAVAAVLGVKALPKQTDDESQNSLQASGIYVDATFGRGGHSRLLLSQLADNATLIVFDKDPTAIRVAQELASTDSRVQVVHDSFATLTDSLAAMGITQVDGLMADLGISSPQIDDGSRGFSFMRDGAVDMRMDTSRGQSVAEWLETVDDDTLANVLYDFGEERHSRRIARAIKQMDRYKSTLELAEVIKVAHPNWQRGKHPATQSFQAMRIFINNELGDVDNFLEQSIPILKVGGQLAVISFHSLEDRRIKQFLQRHSKGQYPEDENLPMPPKRPRYFSKPKRVGPSKAEISNNPRSRSAWLRMATRTDTDYLADIEP.

S-adenosyl-L-methionine is bound by residues 54 to 56 (GGH), Asp74, Phe100, Asp121, and Gln128. The tract at residues 272–318 (RHSKGQYPEDENLPMPPKRPRYFSKPKRVGPSKAEISNNPRSRSAWL) is disordered. Basic residues predominate over residues 289 to 301 (KRPRYFSKPKRVG).

The protein belongs to the methyltransferase superfamily. RsmH family.

The protein localises to the cytoplasm. It catalyses the reaction cytidine(1402) in 16S rRNA + S-adenosyl-L-methionine = N(4)-methylcytidine(1402) in 16S rRNA + S-adenosyl-L-homocysteine + H(+). Specifically methylates the N4 position of cytidine in position 1402 (C1402) of 16S rRNA. This Psychrobacter arcticus (strain DSM 17307 / VKM B-2377 / 273-4) protein is Ribosomal RNA small subunit methyltransferase H.